The sequence spans 638 residues: Methionine--tRNA ligase (638 aa).

Residues 12–22 (YYPSDKLHIGH) carry the 'HIGH' region motif. Cysteine 127, cysteine 130, cysteine 144, and cysteine 147 together coordinate Zn(2+). Residues 296-300 (KMSKS) carry the 'KMSKS' region motif. Position 299 (lysine 299) interacts with ATP. In terms of domain architecture, tRNA-binding spans 538–638 (DFSKVQLRVA…KDIESGSKIS (101 aa)).

It belongs to the class-I aminoacyl-tRNA synthetase family. MetG type 2A subfamily. As to quaternary structure, homodimer. The cofactor is Zn(2+).

Its subcellular location is the cytoplasm. The enzyme catalyses tRNA(Met) + L-methionine + ATP = L-methionyl-tRNA(Met) + AMP + diphosphate. Is required not only for elongation of protein synthesis but also for the initiation of all mRNA translation through initiator tRNA(fMet) aminoacylation. In Caldanaerobacter subterraneus subsp. tengcongensis (strain DSM 15242 / JCM 11007 / NBRC 100824 / MB4) (Thermoanaerobacter tengcongensis), this protein is Methionine--tRNA ligase (metG).